We begin with the raw amino-acid sequence, 938 residues long: Protein translocase subunit SecA 1 (938 aa).

ATP is bound by residues Gln-84, Gly-102 to Thr-106, and Asp-491. Residues Gln-865–Arg-938 are disordered. Residues Thr-918–Arg-927 show a composition bias toward basic and acidic residues.

Belongs to the SecA family. In terms of assembly, monomer and homodimer. Part of the essential Sec protein translocation apparatus which comprises SecA, SecYEG and auxiliary proteins SecDF. Other proteins may also be involved.

The protein localises to the cell membrane. It is found in the cytoplasm. The enzyme catalyses ATP + H2O + cellular proteinSide 1 = ADP + phosphate + cellular proteinSide 2.. In terms of biological role, part of the Sec protein translocase complex. Interacts with the SecYEG preprotein conducting channel. Has a central role in coupling the hydrolysis of ATP to the transfer of proteins into and across the cell membrane, serving as an ATP-driven molecular motor driving the stepwise translocation of polypeptide chains across the membrane. This chain is Protein translocase subunit SecA 1, found in Mycolicibacterium vanbaalenii (strain DSM 7251 / JCM 13017 / BCRC 16820 / KCTC 9966 / NRRL B-24157 / PYR-1) (Mycobacterium vanbaalenii).